The chain runs to 374 residues: UDP-N-acetylglucosamine--N-acetylmuramyl-(pentapeptide) pyrophosphoryl-undecaprenol N-acetylglucosamine transferase (374 aa).

Residues 13–15, Asn124, Arg165, Ser193, and Gln294 contribute to the UDP-N-acetyl-alpha-D-glucosamine site; that span reads TGG.

Belongs to the glycosyltransferase 28 family. MurG subfamily.

The protein resides in the cell inner membrane. It carries out the reaction di-trans,octa-cis-undecaprenyl diphospho-N-acetyl-alpha-D-muramoyl-L-alanyl-D-glutamyl-meso-2,6-diaminopimeloyl-D-alanyl-D-alanine + UDP-N-acetyl-alpha-D-glucosamine = di-trans,octa-cis-undecaprenyl diphospho-[N-acetyl-alpha-D-glucosaminyl-(1-&gt;4)]-N-acetyl-alpha-D-muramoyl-L-alanyl-D-glutamyl-meso-2,6-diaminopimeloyl-D-alanyl-D-alanine + UDP + H(+). It functions in the pathway cell wall biogenesis; peptidoglycan biosynthesis. In terms of biological role, cell wall formation. Catalyzes the transfer of a GlcNAc subunit on undecaprenyl-pyrophosphoryl-MurNAc-pentapeptide (lipid intermediate I) to form undecaprenyl-pyrophosphoryl-MurNAc-(pentapeptide)GlcNAc (lipid intermediate II). In Rhizobium rhizogenes (strain K84 / ATCC BAA-868) (Agrobacterium radiobacter), this protein is UDP-N-acetylglucosamine--N-acetylmuramyl-(pentapeptide) pyrophosphoryl-undecaprenol N-acetylglucosamine transferase.